The chain runs to 386 residues: O-methyltransferase 10 (386 aa).

S-adenosyl-L-homocysteine-binding residues include S207, G231, D254, D274, and K288. Residue D254 coordinates S-adenosyl-L-methionine. The active-site Proton acceptor is H292.

This sequence belongs to the class I-like SAM-binding methyltransferase superfamily. Cation-independent O-methyltransferase family. Homodimer.

The enzyme catalyses dopamine + S-adenosyl-L-methionine = 4-methoxytyramine + S-adenosyl-L-homocysteine + H(+). It catalyses the reaction 3,4-dihydroxy-5-methoxyphenethylamine + S-adenosyl-L-methionine = 3-hydroxy-4,5-dimethoxyphenethylamine + S-adenosyl-L-homocysteine + H(+). The catalysed reaction is 3-hydroxy-4,5-dimethoxyphenethylamine + S-adenosyl-L-methionine = mescaline + S-adenosyl-L-homocysteine + H(+). It carries out the reaction 4-hydroxy-3,5-dimethoxyphenethylamine + S-adenosyl-L-methionine = mescaline + S-adenosyl-L-homocysteine + H(+). It functions in the pathway aromatic compound metabolism. It participates in alkaloid biosynthesis. In terms of biological role, O-methyltransferase participating in the biosynthesis of natural products derived from phenylethylamine, including mescaline, a natural hallucinogen potentially used in psychotherapeutic treatments. Catalyzes the O-methylation of mescaline para hydroxyl groups, using dopamine, 3,4-dihydroxy-5-methoxyphenethylamine, 3-hydroxy-4,5-dimethoxyphenethylamine and 4-hydroxy-3,5-dimethoxyphenethylamine as substrates. The sequence is that of O-methyltransferase 10 from Lophophora williamsii (Peyote).